The chain runs to 629 residues: ATP-dependent RNA helicase DBP6 (629 aa).

Positions Met-1 to His-129 are disordered. Acidic residues predominate over residues Ala-72–Glu-84. A phosphoserine mark is found at Ser-73, Ser-77, and Ser-78. The span at Ser-88 to Leu-103 shows a compositional bias: polar residues. The segment covering Lys-116–Ala-125 has biased composition (acidic residues). A Q motif motif is present at residues Thr-197 to Leu-205. The 181-residue stretch at Arg-221–Phe-401 folds into the Helicase ATP-binding domain. Residue Ala-234–Thr-241 participates in ATP binding. The DEAD box motif lies at Asp-341–Asp-344. One can recognise a Helicase C-terminal domain in the interval Ser-437–Thr-603.

It belongs to the DEAD box helicase family. DDX51/DBP6 subfamily. In terms of assembly, associated with pre-ribosomal particles. Interacts with DBP9 and RSA3. Together with NOP8, URB1, URB2 and RSA3, forms an RNA-independent complex, which is required during early maturation of nascent 60S ribosomal subunits.

It localises to the nucleus. It is found in the nucleolus. It catalyses the reaction ATP + H2O = ADP + phosphate + H(+). Its function is as follows. ATP-binding RNA helicase involved in the biogenesis of 60S ribosomal subunits and is required for the normal formation of 25S and 5.8S rRNAs. The chain is ATP-dependent RNA helicase DBP6 (DBP6) from Saccharomyces cerevisiae (strain ATCC 204508 / S288c) (Baker's yeast).